We begin with the raw amino-acid sequence, 373 residues long: Probable tRNA sulfurtransferase (373 aa).

Residues 54–158 (NKNIEELSKV…NDVAYFYHKI (105 aa)) enclose the THUMP domain. Residues 176-177 (LF), 201-202 (NF), Lys-256, Gly-278, and Gln-287 each bind ATP.

The protein belongs to the ThiI family.

It localises to the cytoplasm. It carries out the reaction [ThiI sulfur-carrier protein]-S-sulfanyl-L-cysteine + a uridine in tRNA + 2 reduced [2Fe-2S]-[ferredoxin] + ATP + H(+) = [ThiI sulfur-carrier protein]-L-cysteine + a 4-thiouridine in tRNA + 2 oxidized [2Fe-2S]-[ferredoxin] + AMP + diphosphate. The enzyme catalyses [ThiS sulfur-carrier protein]-C-terminal Gly-Gly-AMP + S-sulfanyl-L-cysteinyl-[cysteine desulfurase] + AH2 = [ThiS sulfur-carrier protein]-C-terminal-Gly-aminoethanethioate + L-cysteinyl-[cysteine desulfurase] + A + AMP + 2 H(+). Its pathway is cofactor biosynthesis; thiamine diphosphate biosynthesis. Catalyzes the ATP-dependent transfer of a sulfur to tRNA to produce 4-thiouridine in position 8 of tRNAs, which functions as a near-UV photosensor. Also catalyzes the transfer of sulfur to the sulfur carrier protein ThiS, forming ThiS-thiocarboxylate. This is a step in the synthesis of thiazole, in the thiamine biosynthesis pathway. The sulfur is donated as persulfide by IscS. The protein is Probable tRNA sulfurtransferase of Saccharolobus islandicus (strain M.16.4 / Kamchatka #3) (Sulfolobus islandicus).